The sequence spans 288 residues: Phosphatidate cytidylyltransferase (288 aa).

7 helical membrane passes run Ile-10–Leu-30, Pro-52–Thr-72, Leu-89–Pro-109, Asn-118–Leu-138, Gly-152–Phe-172, Trp-192–Phe-212, and Ile-223–Thr-243.

The protein belongs to the CDS family.

It localises to the cell inner membrane. The catalysed reaction is a 1,2-diacyl-sn-glycero-3-phosphate + CTP + H(+) = a CDP-1,2-diacyl-sn-glycerol + diphosphate. Its pathway is phospholipid metabolism; CDP-diacylglycerol biosynthesis; CDP-diacylglycerol from sn-glycerol 3-phosphate: step 3/3. The protein is Phosphatidate cytidylyltransferase (cdsA) of Haemophilus influenzae (strain ATCC 51907 / DSM 11121 / KW20 / Rd).